Here is a 125-residue protein sequence, read N- to C-terminus: 17 kDa gas vesicle protein (125 aa).

The protein belongs to the gas vesicle GvpC family.

It is found in the gas vesicle. In terms of biological role, gas vesicles (GV) are hollow, gas filled proteinaceous nanostructures. During planktonic growth they allow positioning of the organism at a favorable depth for light or nutrient acquisition. The sequence is that of 17 kDa gas vesicle protein from Dactylococcopsis salina (strain PCC 8305) (Myxobactron salinum).